The chain runs to 311 residues: Putative ribose-phosphate pyrophosphokinase 2 (311 aa).

ATP contacts are provided by residues 38 to 40 (DGE) and 97 to 98 (RQ). The Mg(2+) site is built by His-131 and Asp-171. Residue Asp-219 coordinates D-ribose 5-phosphate.

Belongs to the ribose-phosphate pyrophosphokinase family. Class I subfamily. As to quaternary structure, homohexamer. It depends on Mg(2+) as a cofactor.

It is found in the cytoplasm. The catalysed reaction is D-ribose 5-phosphate + ATP = 5-phospho-alpha-D-ribose 1-diphosphate + AMP + H(+). It participates in metabolic intermediate biosynthesis; 5-phospho-alpha-D-ribose 1-diphosphate biosynthesis; 5-phospho-alpha-D-ribose 1-diphosphate from D-ribose 5-phosphate (route I): step 1/1. Involved in the biosynthesis of the central metabolite phospho-alpha-D-ribosyl-1-pyrophosphate (PRPP) via the transfer of pyrophosphoryl group from ATP to 1-hydroxyl of ribose-5-phosphate (Rib-5-P). This chain is Putative ribose-phosphate pyrophosphokinase 2, found in Listeria monocytogenes serotype 4b (strain F2365).